The sequence spans 393 residues: tRNA (guanine-N(7)-)-methyltransferase (393 aa).

S-adenosyl-L-methionine-binding residues include glutamate 124, glutamate 149, and aspartate 176. Residue aspartate 232 participates in substrate binding.

This sequence belongs to the class I-like SAM-binding methyltransferase superfamily. TrmB family.

It carries out the reaction guanosine(46) in tRNA + S-adenosyl-L-methionine = N(7)-methylguanosine(46) in tRNA + S-adenosyl-L-homocysteine. The protein operates within tRNA modification; N(7)-methylguanine-tRNA biosynthesis. Its function is as follows. Catalyzes the formation of N(7)-methylguanine at position 46 (m7G46) in tRNA. The protein is tRNA (guanine-N(7)-)-methyltransferase of Helicobacter pylori (strain HPAG1).